Reading from the N-terminus, the 514-residue chain is 2,3-bisphosphoglycerate-independent phosphoglycerate mutase (514 aa).

Residues aspartate 14 and serine 64 each coordinate Mn(2+). The Phosphoserine intermediate role is filled by serine 64. Residues histidine 125, 155–156 (RD), arginine 187, arginine 193, 263–266 (RADR), and lysine 337 each bind substrate. 5 residues coordinate Mn(2+): aspartate 404, histidine 408, aspartate 445, histidine 446, and histidine 464.

This sequence belongs to the BPG-independent phosphoglycerate mutase family. Monomer. Mn(2+) is required as a cofactor.

The catalysed reaction is (2R)-2-phosphoglycerate = (2R)-3-phosphoglycerate. It functions in the pathway carbohydrate degradation; glycolysis; pyruvate from D-glyceraldehyde 3-phosphate: step 3/5. In terms of biological role, catalyzes the interconversion of 2-phosphoglycerate and 3-phosphoglycerate. The polypeptide is 2,3-bisphosphoglycerate-independent phosphoglycerate mutase (Pseudoalteromonas translucida (strain TAC 125)).